The sequence spans 227 residues: Cytochrome c oxidase subunit 2 (227 aa).

Residues 1–14 lie on the Mitochondrial intermembrane side of the membrane; that stretch reads MAHAAQMGLQDATS. The chain crosses the membrane as a helical span at residues 15-45; it reads PIMEELISFHDHALMIIFLISFLVLYALFLT. Over 46-59 the chain is Mitochondrial matrix; it reads LTTKLTNTNITDAQ. Residues 60 to 87 traverse the membrane as a helical segment; the sequence is EMETVWTILPAIILVLIALPSLRILYLT. Residues 88 to 227 are Mitochondrial intermembrane-facing; the sequence is DEINDPSFTI…IFEMGPVFTL (140 aa). Cu cation contacts are provided by H161, C196, E198, C200, H204, and M207. Mg(2+) is bound at residue E198.

This sequence belongs to the cytochrome c oxidase subunit 2 family. As to quaternary structure, component of the cytochrome c oxidase (complex IV, CIV), a multisubunit enzyme composed of 14 subunits. The complex is composed of a catalytic core of 3 subunits MT-CO1, MT-CO2 and MT-CO3, encoded in the mitochondrial DNA, and 11 supernumerary subunits COX4I, COX5A, COX5B, COX6A, COX6B, COX6C, COX7A, COX7B, COX7C, COX8 and NDUFA4, which are encoded in the nuclear genome. The complex exists as a monomer or a dimer and forms supercomplexes (SCs) in the inner mitochondrial membrane with NADH-ubiquinone oxidoreductase (complex I, CI) and ubiquinol-cytochrome c oxidoreductase (cytochrome b-c1 complex, complex III, CIII), resulting in different assemblies (supercomplex SCI(1)III(2)IV(1) and megacomplex MCI(2)III(2)IV(2)). Found in a complex with TMEM177, COA6, COX18, COX20, SCO1 and SCO2. Interacts with TMEM177 in a COX20-dependent manner. Interacts with COX20. Interacts with COX16. It depends on Cu cation as a cofactor.

It localises to the mitochondrion inner membrane. The catalysed reaction is 4 Fe(II)-[cytochrome c] + O2 + 8 H(+)(in) = 4 Fe(III)-[cytochrome c] + 2 H2O + 4 H(+)(out). Functionally, component of the cytochrome c oxidase, the last enzyme in the mitochondrial electron transport chain which drives oxidative phosphorylation. The respiratory chain contains 3 multisubunit complexes succinate dehydrogenase (complex II, CII), ubiquinol-cytochrome c oxidoreductase (cytochrome b-c1 complex, complex III, CIII) and cytochrome c oxidase (complex IV, CIV), that cooperate to transfer electrons derived from NADH and succinate to molecular oxygen, creating an electrochemical gradient over the inner membrane that drives transmembrane transport and the ATP synthase. Cytochrome c oxidase is the component of the respiratory chain that catalyzes the reduction of oxygen to water. Electrons originating from reduced cytochrome c in the intermembrane space (IMS) are transferred via the dinuclear copper A center (CU(A)) of subunit 2 and heme A of subunit 1 to the active site in subunit 1, a binuclear center (BNC) formed by heme A3 and copper B (CU(B)). The BNC reduces molecular oxygen to 2 water molecules using 4 electrons from cytochrome c in the IMS and 4 protons from the mitochondrial matrix. The sequence is that of Cytochrome c oxidase subunit 2 (MT-CO2) from Symphalangus syndactylus (Siamang).